We begin with the raw amino-acid sequence, 234 residues long: Mannose/glucose-specific lectin Cramoll (234 aa).

The Mn(2+) site is built by Glu-8 and Asp-10. Residues Asp-10, Tyr-12, Asn-14, and Asp-19 each coordinate Ca(2+). Tyr-12 provides a ligand contact to a carbohydrate. Mn(2+)-binding residues include Asp-19, His-24, and Ser-34. 99 to 100 (LY) provides a ligand contact to a carbohydrate. Asp-205 is a binding site for Ca(2+). Residue Arg-225 participates in a carbohydrate binding.

Belongs to the leguminous lectin family. As to quaternary structure, homotetramer. In terms of processing, the alpha and beta chains are produced by partial proteolytic processing of the lectin precursor by an asparaginyl endopeptidase.

In terms of biological role, glucose/D-mannose specific lectin. In Cratylia mollis (Camaratu bean), this protein is Mannose/glucose-specific lectin Cramoll.